The chain runs to 72 residues: Bowman-Birk type proteinase inhibitor (72 aa).

Disulfide bonds link cysteine 8-cysteine 61, cysteine 9-cysteine 24, cysteine 12-cysteine 57, cysteine 14-cysteine 22, cysteine 31-cysteine 38, cysteine 35-cysteine 50, and cysteine 40-cysteine 48.

Belongs to the Bowman-Birk serine protease inhibitor family.

In terms of biological role, this inhibitor has two domains, each with separate antiprotease activity. 1 mole of inhibitor inhibits either 1 mole of trypsin or 2 moles of chymotrypsin, stoichiometrically. This Vicia sativa subsp. nigra (Common vetch) protein is Bowman-Birk type proteinase inhibitor.